The following is a 553-amino-acid chain: Heterochromatin protein 1-binding protein 3 (553 aa).

Residue Ala-2 is modified to N-acetylalanine. Ser-6 carries the post-translational modification Phosphoserine. Disordered stretches follow at residues 29 to 134 (KLGE…KTIP) and 140 to 159 (SASQ…SPRP). At Thr-51 the chain carries Phosphothreonine. Positions 60–71 (GEEEKPEPDISS) are enriched in acidic residues. Lys-64 is covalently cross-linked (Glycyl lysine isopeptide (Lys-Gly) (interchain with G-Cter in SUMO2)). The residue at position 85 (Thr-85) is a Phosphothreonine. The span at 94–127 (EQPKGEPENEEKEENKSSEETKKDEKDQSKEKEK) shows a compositional bias: basic and acidic residues. Lys-97 participates in a covalent cross-link: Glycyl lysine isopeptide (Lys-Gly) (interchain with G-Cter in SUMO2). The segment covering 140–154 (SASQLARAQKQTPMA) has biased composition (polar residues). A phosphoserine mark is found at Ser-142, Ser-155, and Ser-156. Residues 157-232 (PRPKMDAILT…GASGSFVVVQ (76 aa)) enclose the H15 1 domain. At Lys-190 the chain carries N6-acetyllysine. The interval 230 to 255 (VVQKSRKTPQKSRNRKNRSSAVDPEP) is disordered. Residues 233–247 (KSRKTPQKSRNRKNR) are compositionally biased toward basic residues. 2 positions are modified to phosphoserine: Ser-248 and Ser-249. The PxVxL motif signature appears at 255-259 (PQVKL). 2 consecutive H15 domains span residues 255–330 (PQVK…QLKK) and 337–413 (LGGS…QLCF). Residue Lys-258 forms a Glycyl lysine isopeptide (Lys-Gly) (interchain with G-Cter in SUMO2) linkage. The tract at residues 422–553 (LFPKKEPDDS…TMKKSFRVKK (132 aa)) is disordered. Over residues 430–450 (DSRDEDEDEDESSEEDSEDEE) the composition is skewed to acidic residues. A phosphoserine mark is found at Ser-441, Ser-442, and Ser-446. Over residues 489–510 (GKARPLPKKAPPKAKTPAKKTR) the composition is skewed to basic residues. The span at 517–527 (KKPSGGSSKKP) shows a compositional bias: low complexity. Residues 543 to 553 (STMKKSFRVKK) are compositionally biased toward basic residues.

As to quaternary structure, interacts (via PxVxL motif) with CBX5 (via Trp-174).

It is found in the nucleus. The protein localises to the chromosome. Component of heterochromatin that maintains heterochromatin integrity during G1/S progression and regulates the duration of G1 phase to critically influence cell proliferative capacity. Mediates chromatin condensation during hypoxia, leading to increased tumor cell viability, radio-resistance, chemo-resistance and self-renewal. In Homo sapiens (Human), this protein is Heterochromatin protein 1-binding protein 3 (HP1BP3).